The primary structure comprises 782 residues: Ribosome biogenesis protein ERB1 (782 aa).

Residues 1-11 are compositionally biased toward basic residues; sequence MSVNSRKRKVA. Residues 1–120 form a disordered region; the sequence is MSVNSRKRKV…LEGEEDESLK (120 aa). Acidic residues-rich tracts occupy residues 39-51 and 59-75; these read DESE…EDTD and LSDE…DEAE. The segment covering 82–92 has biased composition (polar residues); the sequence is RNLNTSGGSQQ. The segment covering 106 to 117 has biased composition (acidic residues); sequence GADGELEGEEDE. WD repeat units lie at residues 432–471 and 475–516; these read GQEG…QVWN and SDEE…PDVE. A disordered region spans residues 533-556; the sequence is KPSTAANGEAPKQSPGKWSRPGSR. 4 WD repeats span residues 612–652, 653–692, 696–736, and 752–782; these read RLKG…KILQ, PGAK…KPYK, FHKE…DLME, and KSRL…RLWN.

It belongs to the WD repeat BOP1/ERB1 family. Component of the NOP7 complex, composed of ERB1, NOP7 and YTM1. The complex is held together by ERB1, which interacts with NOP7 via its N-terminal domain and with YTM1 via a high-affinity interaction between the seven-bladed beta-propeller domains of the 2 proteins. The NOP7 complex associates with the 66S pre-ribosome.

The protein localises to the nucleus. Its subcellular location is the nucleolus. The protein resides in the nucleoplasm. In terms of biological role, component of the NOP7 complex, which is required for maturation of the 25S and 5.8S ribosomal RNAs and formation of the 60S ribosome. The sequence is that of Ribosome biogenesis protein ERB1 from Phaeosphaeria nodorum (strain SN15 / ATCC MYA-4574 / FGSC 10173) (Glume blotch fungus).